A 165-amino-acid chain; its full sequence is Ribosome maturation factor RimM (165 aa).

A PRC barrel domain is found at 94–165; that stretch reads EDEFYIADLN…YGILNYKREV (72 aa).

Belongs to the RimM family. In terms of assembly, binds ribosomal protein uS19.

The protein resides in the cytoplasm. In terms of biological role, an accessory protein needed during the final step in the assembly of 30S ribosomal subunit, possibly for assembly of the head region. Essential for efficient processing of 16S rRNA. May be needed both before and after RbfA during the maturation of 16S rRNA. It has affinity for free ribosomal 30S subunits but not for 70S ribosomes. In Rickettsia canadensis (strain McKiel), this protein is Ribosome maturation factor RimM.